The primary structure comprises 490 residues: Myocilin (490 aa).

The signal sequence occupies residues 1-18 (MPAVQLLLLACLLGGVGA). Residues 51–170 (GQAMLAIQEL…QEVASLRRGQ (120 aa)) are a coiled coil. The segment at 152 to 186 (LARRLESSSQEVASLRRGQCPQAHSSSQDVPSGSR) is disordered. Polar residues predominate over residues 173-182 (QAHSSSQDVP). In terms of domain architecture, Olfactomedin-like spans 230-489 (GCGELVWVGE…MVSYDIKLSR (260 aa)). Cys-231 and Cys-419 are disulfide-bonded. Ca(2+) contacts are provided by Asp-366, Asn-414, Ala-415, Ile-463, and Asp-464. The Microbody targeting signal motif lies at 488–490 (SRL).

As to quaternary structure, homodimer (via N-terminus). Can also form higher oligomers. Interacts with OLFM3, FN1, NRCAM, GLDN and NFASC. Interacts (via N-terminus) with MYL2. Interacts with SFRP1, FRZB, FZD7, FZD10, FZD1 and WIF1; regulates Wnt signaling. Interacts with SNTA1; regulates muscle hypertrophy. Interacts with ERBB2 and ERBB3; activates ERBB2-ERBB3 signaling pathway. Interacts with SNCG; affects its secretion and its aggregation. Palmitoylated. Post-translationally, undergoes a calcium-dependent proteolytic cleavage at Gln-212 by CAPN2 in the endoplasmic reticulum. The result is the production of two fragments, one of 35 kDa containing the C-terminal olfactomedin-like domain, and another of 20 kDa containing the N-terminal leucine zipper-like domain. In terms of processing, glycosylated. In terms of tissue distribution, the myocilin 35 kDa fragment is detected in iris and ciliary body.

It is found in the secreted. Its subcellular location is the golgi apparatus. It localises to the cytoplasmic vesicle. The protein localises to the extracellular space. The protein resides in the extracellular matrix. It is found in the extracellular exosome. Its subcellular location is the mitochondrion. It localises to the mitochondrion intermembrane space. The protein localises to the mitochondrion inner membrane. The protein resides in the mitochondrion outer membrane. It is found in the rough endoplasmic reticulum. Its subcellular location is the cell projection. It localises to the cilium. The protein localises to the endoplasmic reticulum. Its function is as follows. Secreted glycoprotein regulating the activation of different signaling pathways in adjacent cells to control different processes including cell adhesion, cell-matrix adhesion, cytoskeleton organization and cell migration. Promotes substrate adhesion, spreading and formation of focal contacts. Negatively regulates cell-matrix adhesion and stress fiber assembly through Rho protein signal transduction. Modulates the organization of actin cytoskeleton by stimulating the formation of stress fibers through interactions with components of Wnt signaling pathways. Promotes cell migration through activation of PTK2 and the downstream phosphatidylinositol 3-kinase signaling. Plays a role in bone formation and promotes osteoblast differentiation in a dose-dependent manner through mitogen-activated protein kinase signaling. Mediates myelination in the peripheral nervous system through ERBB2/ERBB3 signaling. Plays a role as a regulator of muscle hypertrophy through the components of dystrophin-associated protein complex. Involved in positive regulation of mitochondrial depolarization. Plays a role in neurite outgrowth. May participate in the obstruction of fluid outflow in the trabecular meshwork. The sequence is that of Myocilin (MYOC) from Bos taurus (Bovine).